Consider the following 217-residue polypeptide: Adapter protein MecA (217 aa).

This sequence belongs to the MecA family. As to quaternary structure, homodimer.

In terms of biological role, enables the recognition and targeting of unfolded and aggregated proteins to the ClpC protease or to other proteins involved in proteolysis. The polypeptide is Adapter protein MecA (Listeria innocua serovar 6a (strain ATCC BAA-680 / CLIP 11262)).